The sequence spans 95 residues: Aspartyl/glutamyl-tRNA(Asn/Gln) amidotransferase subunit C (95 aa).

This sequence belongs to the GatC family. Heterotrimer of A, B and C subunits.

It catalyses the reaction L-glutamyl-tRNA(Gln) + L-glutamine + ATP + H2O = L-glutaminyl-tRNA(Gln) + L-glutamate + ADP + phosphate + H(+). The enzyme catalyses L-aspartyl-tRNA(Asn) + L-glutamine + ATP + H2O = L-asparaginyl-tRNA(Asn) + L-glutamate + ADP + phosphate + 2 H(+). Its function is as follows. Allows the formation of correctly charged Asn-tRNA(Asn) or Gln-tRNA(Gln) through the transamidation of misacylated Asp-tRNA(Asn) or Glu-tRNA(Gln) in organisms which lack either or both of asparaginyl-tRNA or glutaminyl-tRNA synthetases. The reaction takes place in the presence of glutamine and ATP through an activated phospho-Asp-tRNA(Asn) or phospho-Glu-tRNA(Gln). The sequence is that of Aspartyl/glutamyl-tRNA(Asn/Gln) amidotransferase subunit C from Bartonella henselae (strain ATCC 49882 / DSM 28221 / CCUG 30454 / Houston 1) (Rochalimaea henselae).